Reading from the N-terminus, the 714-residue chain is Polyribonucleotide nucleotidyltransferase (714 aa).

Mg(2+)-binding residues include Asp487 and Asp493. Residues 554-613 (PRIEVLQIPTDKIRDVIGTGGKVIREIVEKTGAKINIEDDGTVKVASANGESIRAAIKWI) enclose the KH domain. The S1 motif domain occupies 623–691 (GQIYDGTVVK…DRGKVRLSMK (69 aa)).

This sequence belongs to the polyribonucleotide nucleotidyltransferase family. Requires Mg(2+) as cofactor.

The protein localises to the cytoplasm. It carries out the reaction RNA(n+1) + phosphate = RNA(n) + a ribonucleoside 5'-diphosphate. Its function is as follows. Involved in mRNA degradation. Catalyzes the phosphorolysis of single-stranded polyribonucleotides processively in the 3'- to 5'-direction. This Afipia carboxidovorans (strain ATCC 49405 / DSM 1227 / KCTC 32145 / OM5) (Oligotropha carboxidovorans) protein is Polyribonucleotide nucleotidyltransferase.